The sequence spans 68 residues: Protein SlyX homolog (68 aa).

It belongs to the SlyX family.

This chain is Protein SlyX homolog, found in Pseudomonas syringae pv. syringae (strain B728a).